The sequence spans 122 residues: Small ribosomal subunit protein uS13 (122 aa).

A disordered region spans residues 99-122; it reads RGQRTHTNARTRKGPAKAIAGKKK.

The protein belongs to the universal ribosomal protein uS13 family. Part of the 30S ribosomal subunit. Forms a loose heterodimer with protein S19. Forms two bridges to the 50S subunit in the 70S ribosome.

Its function is as follows. Located at the top of the head of the 30S subunit, it contacts several helices of the 16S rRNA. In the 70S ribosome it contacts the 23S rRNA (bridge B1a) and protein L5 of the 50S subunit (bridge B1b), connecting the 2 subunits; these bridges are implicated in subunit movement. Contacts the tRNAs in the A and P-sites. The polypeptide is Small ribosomal subunit protein uS13 (Allorhizobium ampelinum (strain ATCC BAA-846 / DSM 112012 / S4) (Agrobacterium vitis (strain S4))).